A 163-amino-acid chain; its full sequence is Shikimate kinase (163 aa).

10–15 (GVGKTT) contributes to the ATP binding site. Thr14 contacts Mg(2+). Positions 28, 52, and 75 each coordinate substrate. Arg116 serves as a coordination point for ATP. Arg134 contributes to the substrate binding site.

The protein belongs to the shikimate kinase family. Monomer. The cofactor is Mg(2+).

It localises to the cytoplasm. The enzyme catalyses shikimate + ATP = 3-phosphoshikimate + ADP + H(+). It functions in the pathway metabolic intermediate biosynthesis; chorismate biosynthesis; chorismate from D-erythrose 4-phosphate and phosphoenolpyruvate: step 5/7. Its function is as follows. Catalyzes the specific phosphorylation of the 3-hydroxyl group of shikimic acid using ATP as a cosubstrate. The sequence is that of Shikimate kinase from Streptococcus suis (strain 98HAH33).